The following is a 620-amino-acid chain: DNA mismatch repair protein MutL (620 aa).

Residues 332 to 402 (SELGLEAQPE…YRTPLRPATH (71 aa)) are disordered. The span at 352–365 (SNSTNSNVSSTSYS) shows a compositional bias: low complexity. A compositionally biased stretch (polar residues) spans 378-394 (PLTTTATSYNQGQSSYR).

This sequence belongs to the DNA mismatch repair MutL/HexB family.

This protein is involved in the repair of mismatches in DNA. It is required for dam-dependent methyl-directed DNA mismatch repair. May act as a 'molecular matchmaker', a protein that promotes the formation of a stable complex between two or more DNA-binding proteins in an ATP-dependent manner without itself being part of a final effector complex. This chain is DNA mismatch repair protein MutL, found in Shewanella piezotolerans (strain WP3 / JCM 13877).